The primary structure comprises 333 residues: Glycerol-3-phosphate dehydrogenase [NAD(P)+] 2 (333 aa).

Residues Ser-12, Trp-13, Arg-32, and Lys-106 each coordinate NADPH. Residues Lys-106 and Gly-134 each contribute to the sn-glycerol 3-phosphate site. Ala-138 is an NADPH binding site. Sn-glycerol 3-phosphate-binding residues include Lys-189, Asp-242, Ser-252, Arg-253, and Asn-254. The active-site Proton acceptor is Lys-189. Arg-253 provides a ligand contact to NADPH. 2 residues coordinate NADPH: Val-277 and Glu-279.

This sequence belongs to the NAD-dependent glycerol-3-phosphate dehydrogenase family.

It localises to the cytoplasm. It catalyses the reaction sn-glycerol 3-phosphate + NAD(+) = dihydroxyacetone phosphate + NADH + H(+). The enzyme catalyses sn-glycerol 3-phosphate + NADP(+) = dihydroxyacetone phosphate + NADPH + H(+). The protein operates within membrane lipid metabolism; glycerophospholipid metabolism. In terms of biological role, catalyzes the reduction of the glycolytic intermediate dihydroxyacetone phosphate (DHAP) to sn-glycerol 3-phosphate (G3P), the key precursor for phospholipid synthesis. The chain is Glycerol-3-phosphate dehydrogenase [NAD(P)+] 2 from Sphingopyxis alaskensis (strain DSM 13593 / LMG 18877 / RB2256) (Sphingomonas alaskensis).